A 427-amino-acid polypeptide reads, in one-letter code: Acetylornithine aminotransferase (427 aa).

Residues 1-23 are disordered; that stretch reads MSLQTLIEQATNPPESGSAASSP. Pyridoxal 5'-phosphate is bound by residues 124–125 and Phe-157; that span reads GA. Position 160 (Arg-160) interacts with N(2)-acetyl-L-ornithine. Pyridoxal 5'-phosphate is bound at residue 248–251; the sequence is DEVQ. Lys-277 carries the N6-(pyridoxal phosphate)lysine modification. Ser-304 contacts N(2)-acetyl-L-ornithine. Thr-305 contributes to the pyridoxal 5'-phosphate binding site.

This sequence belongs to the class-III pyridoxal-phosphate-dependent aminotransferase family. ArgD subfamily. In terms of assembly, homodimer. Pyridoxal 5'-phosphate is required as a cofactor.

The protein localises to the cytoplasm. It carries out the reaction N(2)-acetyl-L-ornithine + 2-oxoglutarate = N-acetyl-L-glutamate 5-semialdehyde + L-glutamate. The protein operates within amino-acid biosynthesis; L-arginine biosynthesis; N(2)-acetyl-L-ornithine from L-glutamate: step 4/4. This is Acetylornithine aminotransferase from Nostoc sp. (strain PCC 7120 / SAG 25.82 / UTEX 2576).